The chain runs to 284 residues: Putative ABC transporter ATP-binding protein tll2439 (284 aa).

The 237-residue stretch at 6–242 folds into the ABC transporter domain; that stretch reads LEFHQVGFRY…WPTFAPELGT (237 aa). 40-47 is an ATP binding site; the sequence is GLNGSGKS.

This sequence belongs to the ABC transporter superfamily.

It is found in the cell inner membrane. In terms of biological role, probably part of an ABC transporter complex. Responsible for energy coupling to the transport system. This is Putative ABC transporter ATP-binding protein tll2439 from Thermosynechococcus vestitus (strain NIES-2133 / IAM M-273 / BP-1).